A 99-amino-acid polypeptide reads, in one-letter code: CLAVATA3/ESR (CLE)-related protein 11 (99 aa).

A signal peptide spans 1-31; the sequence is MTKQPKPCSFLFHISLLSALFVFLLISFAFT. A hydroxyproline mark is found at Pro-91 and Pro-94. Pro-94 carries O-linked (Ara...) hydroxyproline glycosylation.

Belongs to the CLV3/ESR signal peptide family. In terms of processing, the O-glycosylation (arabinosylation) of the hydroxyproline Pro-94 enhances binding affinity of the CLE11p peptide for its receptor. Mostly expressed in seedlings, roots and siliques, and, to a lower extent, in leaves, flowers, stems and apex.

The protein resides in the secreted. Its subcellular location is the extracellular space. In terms of biological role, extracellular signal peptide that regulates cell fate. Represses root apical meristem maintenance. Regulates the transition of protophloem cells from proliferation to differentiation, thus impinging on postembryonic growth capacity of the root meristem; this signaling pathway requires CRN and CLV2. The sequence is that of CLAVATA3/ESR (CLE)-related protein 11 from Arabidopsis thaliana (Mouse-ear cress).